We begin with the raw amino-acid sequence, 2443 residues long: NFX1-type zinc finger-containing protein 1 homolog (2443 aa).

3 disordered regions span residues Pro212–His339, Ser545–Gly566, and His583–Pro672. The span at Ile246–Pro263 shows a compositional bias: low complexity. A compositionally biased stretch (pro residues) spans Pro275–Pro294. Polar residues predominate over residues Ser297–His310. Residues Ser311–Ser322 show a composition bias toward low complexity. Over residues Ser545–Val564 the composition is skewed to polar residues. Composition is skewed to basic and acidic residues over residues Gly601–Gln638 and Glu662–Pro672. A UvrD-like helicase ATP-binding domain is found at Met1040–Val1545. Position 1061–1068 (Gly1061–Thr1068) interacts with ATP. 4 NF-X1-type zinc fingers span residues Cys1769–Tyr1791, Cys1853–Gln1873, Cys1912–Glu1930, and Cys2027–Ala2044.

The protein belongs to the ZNFX1 family. In terms of assembly, interacts with ego-1, csr-1, wago-1 and prg-1. Interacts with wago-4; the interaction promotes the transmission of epigenetic information across generations. In terms of tissue distribution, expressed in germs cells. Not expressed in somatic tissues.

Its subcellular location is the cytoplasm. It is found in the perinuclear region. The protein resides in the cytoplasmic granule. It carries out the reaction ATP + H2O = ADP + phosphate + H(+). Functionally, epigenetic inheritance factor which, in association with the Argonaute protein wago-4, mediates small RNA-directed transgenerational epigenetic inheritance and thus balances the transgenerational inheritance of epigenetic information. Specifically, maintains a balanced production of small RNAs by preventing the spread of epigenetic signals towards the 5'-end of target mRNAs. Plays a role in small RNA-induced gene silencing in the germline. The sequence is that of NFX1-type zinc finger-containing protein 1 homolog from Caenorhabditis elegans.